The primary structure comprises 394 residues: Na(+)/H(+) antiporter NhaA (394 aa).

The next 11 helical transmembrane spans lie at 14–34 (AGGLILIIAAAIALLMANSAL), 59–79 (LLLWINDGLMAVFFLVVGLEV), 95–115 (VFPAIAALGGMLAPALIYLLF), 125–145 (GWAIPAATDIAFALGVMALLG), 154–174 (VFLLALAIIDDLGVIIIIALF), 179–199 (VSLQSLGIAAAAIALLAYMNW), 213–233 (LVLWVCILKSGVHATLAGVIV), 254–274 (GLHPWVAYLILPLFAFANAGV), 292–312 (IATGLFIGKPLGIFTFSWLAV), 328–348 (IFAVSVLCGIGFTMSIFIASL), and 363–383 (LGILLGSTTAAVVGYSLLRLV).

This sequence belongs to the NhaA Na(+)/H(+) (TC 2.A.33) antiporter family.

The protein resides in the cell inner membrane. The catalysed reaction is Na(+)(in) + 2 H(+)(out) = Na(+)(out) + 2 H(+)(in). In terms of biological role, na(+)/H(+) antiporter that extrudes sodium in exchange for external protons. The chain is Na(+)/H(+) antiporter NhaA from Yersinia pseudotuberculosis serotype O:1b (strain IP 31758).